The chain runs to 137 residues: Large ribosomal subunit protein uL16 (137 aa).

Belongs to the universal ribosomal protein uL16 family. Part of the 50S ribosomal subunit.

In terms of biological role, binds 23S rRNA and is also seen to make contacts with the A and possibly P site tRNAs. In Francisella tularensis subsp. holarctica (strain FTNF002-00 / FTA), this protein is Large ribosomal subunit protein uL16.